A 746-amino-acid polypeptide reads, in one-letter code: GTPase-activating protein GYP7 (746 aa).

Serine 265 and serine 339 each carry phosphoserine. The region spanning 385–633 is the Rab-GAP TBC domain; the sequence is LENDSLRGKV…HIWENFWTFY (249 aa). The tract at residues 470–505 is disordered; sequence TIDGLPPPPQQLPANENNSTSPESANDESDDADDGV. The span at 481–491 shows a compositional bias: polar residues; the sequence is LPANENNSTSP.

Its subcellular location is the cytoplasm. Functionally, GTPase-activating protein (GAP) that most effectively accelerates the intrinsic GTPase activity of Ypt/Rab-type GTPase YPT7 involved in vacuole docking and fusion. It is also active, but to a lesser extent, on YPT31, YPT32, YPT1, YPT6 and SEC4. Provides a catalytic arginine (arginine finger) in trans to accelerate the GTP hydrolysis rate of the substrate GTPase. The protein is GTPase-activating protein GYP7 (GYP7) of Saccharomyces cerevisiae (strain ATCC 204508 / S288c) (Baker's yeast).